Reading from the N-terminus, the 229-residue chain is PKHD-type hydroxylase BRADO4652 (229 aa).

One can recognise a Fe2OG dioxygenase domain in the interval 78–180 (QIFPPLFNRY…RVASFFWMQS (103 aa)). Residues His-98, Asp-100, and His-161 each contribute to the Fe cation site. Residue Arg-171 coordinates 2-oxoglutarate.

Requires Fe(2+) as cofactor. L-ascorbate serves as cofactor.

This Bradyrhizobium sp. (strain ORS 278) protein is PKHD-type hydroxylase BRADO4652.